A 379-amino-acid polypeptide reads, in one-letter code: Succinyl-diaminopimelate desuccinylase (379 aa).

His70 provides a ligand contact to Zn(2+). Residue Asp72 is part of the active site. Zn(2+) is bound at residue Asp103. Catalysis depends on Glu137, which acts as the Proton acceptor. Residues Glu138, Glu166, and His352 each coordinate Zn(2+).

It belongs to the peptidase M20A family. DapE subfamily. In terms of assembly, homodimer. Zn(2+) serves as cofactor. Requires Co(2+) as cofactor.

It catalyses the reaction N-succinyl-(2S,6S)-2,6-diaminopimelate + H2O = (2S,6S)-2,6-diaminopimelate + succinate. The protein operates within amino-acid biosynthesis; L-lysine biosynthesis via DAP pathway; LL-2,6-diaminopimelate from (S)-tetrahydrodipicolinate (succinylase route): step 3/3. Catalyzes the hydrolysis of N-succinyl-L,L-diaminopimelic acid (SDAP), forming succinate and LL-2,6-diaminopimelate (DAP), an intermediate involved in the bacterial biosynthesis of lysine and meso-diaminopimelic acid, an essential component of bacterial cell walls. The chain is Succinyl-diaminopimelate desuccinylase from Paraburkholderia xenovorans (strain LB400).